Consider the following 60-residue polypeptide: Defensin MGD-1 (60 aa).

4 disulfide bridges follow: C4–C25, C10–C33, C14–C35, and C21–C38. W28 is modified (3-hydroxytryptophan). Cysteine amide is present on C38. A propeptide spanning residues 39–60 is cleaved from the precursor; it reads GGRREDVEDIFDIFDNEAADRF.

It belongs to the invertebrate defensin family. Type 2 subfamily. In terms of processing, the hydroxylation of the Trp-28 is not important for the antibacterial activity. In terms of tissue distribution, abundantly expressed in hemocytes.

Its subcellular location is the secreted. In terms of biological role, active against both Gram-positive and Gram-negative bacteria but is not cytotoxic towards human erythrocytes or protozoa. The chain is Defensin MGD-1 (FH3) from Mytilus galloprovincialis (Mediterranean mussel).